An 835-amino-acid chain; its full sequence is Neuroligin-2 (835 aa).

Residues 1–14 (MWLLALCLVGLAGA) form the signal peptide. Over 15-677 (QRGGGGPGGG…DSRDYSTELS (663 aa)) the chain is Extracellular. N-linked (GlcNAc...) asparagine glycosylation is found at asparagine 98 and asparagine 136. Intrachain disulfides connect cysteine 106/cysteine 141, cysteine 317/cysteine 328, and cysteine 487/cysteine 521. An N-linked (GlcNAc...) asparagine glycan is attached at asparagine 522. Positions 623–668 (PPYATRWPPRPPAGAPGTRRPPPPATLPPEPEPEPGPRAYDRFPGD) are disordered. The span at 630–658 (PPRPPAGAPGTRRPPPPATLPPEPEPEPG) shows a compositional bias: pro residues. The chain crosses the membrane as a helical span at residues 678–698 (VTVAVGASLLFLNILAFAALY). The interval 678–698 (VTVAVGASLLFLNILAFAALY) is required for interaction with LHFPL4. The Cytoplasmic portion of the chain corresponds to 699–835 (YKRDRRQELR…LPHPHSTTRV (137 aa)). Phosphoserine is present on residues serine 713 and serine 718. The disordered stretch occupies residues 790–835 (LLPSGLGPPPPPPPPSLHPFGPFPPPPPTATSHNNTLPHPHSTTRV). Positions 795 to 818 (LGPPPPPPPPSLHPFGPFPPPPPT) are enriched in pro residues. Residues 823 to 835 (NNTLPHPHSTTRV) show a composition bias toward polar residues.

Belongs to the type-B carboxylesterase/lipase family. As to quaternary structure, interacts with neurexins NRXN1, NRXN2 and NRXN3. Interaction with neurexins is mediated by heparan sulfate glycan modification on neurexin. Interacts (via its C-terminus) with DLG4/PSD-95 (via PDZ domain 3). Interacts with PATJ. Interacts with GPHN. Interacts with MDGA1 and MDGA2. Found in a complex with MAGI2 and IGSF9B, where it interacts with MAGI2 (via WW 1, WW 2 and PDZ 2 domains). Identified in a complex of 720 kDa composed of LHFPL4, NLGN2, GABRA1, GABRB2, GABRG2 and GABRB3. Interacts with LHFPL4; leading to mutual regulation of the protein level and synaptic clustering. Interacts with NLGN2. As to expression, expressed in the blood vessel walls. Detected in colon, brain and pancreas islets of Langerhans (at protein level). Detected in brain, and at lower levels in pancreas islet beta cells.

The protein localises to the cell membrane. Its subcellular location is the postsynaptic cell membrane. The protein resides in the presynaptic cell membrane. In terms of biological role, transmembrane scaffolding protein involved in cell-cell interactions via its interactions with neurexin family members. Mediates cell-cell interactions both in neurons and in other types of cells, such as Langerhans beta cells. Plays a role in synapse function and synaptic signal transmission, especially via gamma-aminobutyric acid receptors (GABA(A) receptors). Functions by recruiting and clustering synaptic proteins. Promotes clustering of postsynaptic GABRG2 and GPHN. Promotes clustering of postsynaptic LHFPL4. Modulates signaling by inhibitory synapses, and thereby plays a role in controlling the ratio of signaling by excitatory and inhibitory synapses and information processing. Required for normal signal amplitude from inhibitory synapses, but is not essential for normal signal frequency. May promote the initial formation of synapses, but is not essential for this. In vitro, triggers the de novo formation of presynaptic structures. Mediates cell-cell interactions between Langerhans beta cells and modulates insulin secretion. In Homo sapiens (Human), this protein is Neuroligin-2 (NLGN2).